The chain runs to 226 residues: PKHD-type hydroxylase AZC_3753 (226 aa).

In terms of domain architecture, Fe2OG dioxygenase spans 78–178 (RILPPMFNRY…RVASFFWTQS (101 aa)). Fe cation-binding residues include histidine 96, aspartate 98, and histidine 159. Arginine 169 is a binding site for 2-oxoglutarate.

The cofactor is Fe(2+). L-ascorbate is required as a cofactor.

This Azorhizobium caulinodans (strain ATCC 43989 / DSM 5975 / JCM 20966 / LMG 6465 / NBRC 14845 / NCIMB 13405 / ORS 571) protein is PKHD-type hydroxylase AZC_3753.